The following is a 92-amino-acid chain: Small ribosomal subunit protein uS19 (92 aa).

It belongs to the universal ribosomal protein uS19 family.

Functionally, protein S19 forms a complex with S13 that binds strongly to the 16S ribosomal RNA. The chain is Small ribosomal subunit protein uS19 from Paracoccus denitrificans (strain Pd 1222).